Consider the following 487-residue polypeptide: MEGAEGSDSCDGIQVLLSREVIDAAPQCPHGPTLLFVKVSQGKEQGRRFYACSACRDRKDCHFFQWEDDKVSQARLAAREEYNKSHQPPMTHAQYVGRFQEFTELPLAKRKFCSDCQQLLLPTNWESHSGHRVLGDISLSQLKRPSQLLHPLENKKANAQYLFAERSCTFLMDTIIALGFRRVLCVGTPRLHELIKLRACEGATPPIKSLLLDIDFRYSQFYWEEEFCHYNMFNHHFFGGEAAKMVCQKFLQEEDGKGALLVTDPPFGGLVEPLAFSFKRLREMWKTTNPENESNLPILWMFPYFFESRILQCFPDFTMLDYQVDYDNHALYKHGKTGRKQSPVRIFTDLPPDKIVLPAIEGYRFCSVCERFVCSGNKHCNICNCCTSKDGRPWKHCTQCNKCVKPSWTHCSACNHCALPDHPCGTAGRGCFLCGGKDHKRRGCPHQSVSAHGKRMENLKQKNIKGSMKKQPIAATSKKRKRKRNNP.

Zn(2+)-binding residues include cysteine 28, histidine 30, cysteine 52, cysteine 61, cysteine 113, cysteine 116, histidine 128, and histidine 131. A GRF-type zinc finger spans residues 28 to 70; that stretch reads CPHGPTLLFVKVSQGKEQGRRFYACSACRDRKDCHFFQWEDDK. S-adenosyl-L-methionine is bound by residues 160 to 163, arginine 190, aspartate 213, 231 to 232, and aspartate 264; these read QYLF and NM. Positions 323–343 are regulatory loop; the sequence is QVDYDNHALYKHGKTGRKQSP. Residues cysteine 366, cysteine 369, histidine 379, cysteine 380, cysteine 383, cysteine 386, histidine 396, cysteine 397, cysteine 400, cysteine 403, histidine 410, cysteine 411, cysteine 414, cysteine 417, histidine 422, and cysteine 424 each coordinate Zn(2+). A DHHC domain is found at 381–431; that stretch reads NICNCCTSKDGRPWKHCTQCNKCVKPSWTHCSACNHCALPDHPCGTAGRGC. The segment at 429-446 adopts a CCHC-type zinc-finger fold; it reads RGCFLCGGKDHKRRGCPH. The tract at residues 445-487 is disordered; it reads PHQSVSAHGKRMENLKQKNIKGSMKKQPIAATSKKRKRKRNNP. Basic residues predominate over residues 477 to 487; it reads SKKRKRKRNNP.

It belongs to the ZCCHC4 family.

It localises to the cytoplasm. It is found in the nucleus. Its subcellular location is the nucleolus. It carries out the reaction adenosine(4220) in 28S rRNA + S-adenosyl-L-methionine = N(6)-methyladenosine(4220) in 28S rRNA + S-adenosyl-L-homocysteine + H(+). In terms of biological role, rRNA N6-methyltransferase that specifically methylates the adenine in position 4220 of 28S rRNA. N6-methylation of adenine(4220) in 28S rRNA is required for translation. The sequence is that of rRNA N(6)-adenosine-methyltransferase ZCCHC4 (zcchc4) from Xenopus tropicalis (Western clawed frog).